The primary structure comprises 233 residues: MDIYEHKKSFMERQIRLLNRPMRPPKDWKLPLKSGQLSESVVETVFQRLQLRIQKHAKLNYSHQATQHVAAQIRKLYEQNSAIEDITFLNPLFYGEIDLSNLDSVKSLPHPWPFQKESRPVEKDEEQEKFNRLTGELLGLLTTLSELEQERSELEQIEKMLEPFEDGPSSIHTNMWKKNPELISTLNSTNTMVAKINSLLRGVSFPSLNNDNQEASLEDEIRSQLFEKTISDD.

Thr-189 and Thr-191 each carry phosphothreonine.

This sequence belongs to the NKP1 family. Component of the inner kinetochore constitutive centromere-associated network (CCAN) (also known as central kinetochore Sim4 complex in fission yeast), which is composed of at least cnl2, cnp3, cnp20, fta1, fta2, fta3, fta4, fta6, fta7, mal2, mhf1, mhf2, mis6, mis15, mis17, sim4 and wip1.

It is found in the nucleus. It localises to the chromosome. Its subcellular location is the centromere. The protein localises to the kinetochore. In terms of biological role, component of the kinetochore, a multiprotein complex that assembles on centromeric DNA and attaches chromosomes to spindle microtubules, mediating chromosome segregation and sister chromatid segregation during meiosis and mitosis. Component of the inner kinetochore constitutive centromere-associated network (CCAN), which serves as a structural platform for outer kinetochore assembly. Fta2, fta3 and fta4 associate with the central core (cnt) and inner repeat (inr) region of the centromere. In Schizosaccharomyces pombe (strain 972 / ATCC 24843) (Fission yeast), this protein is Inner kinetochore subunit fta4 (fta4).